A 79-amino-acid chain; its full sequence is U24-theraphotoxin-Cg1a (79 aa).

An N-terminal signal peptide occupies residues Met-1 to Ala-19. Residues Ser-20–Arg-44 constitute a propeptide that is removed on maturation. Intrachain disulfides connect Cys-46–Cys-61, Cys-53–Cys-66, and Cys-60–Cys-73. Trp-78 is subject to Tryptophan amide.

The protein belongs to the neurotoxin 10 (Hwtx-1) family. 35 (Jztx-27) subfamily. Expressed by the venom gland.

The protein resides in the secreted. Probable ion channel inhibitor. The polypeptide is U24-theraphotoxin-Cg1a (Chilobrachys guangxiensis (Chinese earth tiger tarantula)).